The following is a 515-amino-acid chain: tRNA-2-methylthio-N(6)-dimethylallyladenosine synthase (515 aa).

Residues 25-140 (KTYQVRTFGC…LPALLNRARH (116 aa)) form the MTTase N-terminal domain. 6 residues coordinate [4Fe-4S] cluster: Cys-34, Cys-69, Cys-103, Cys-177, Cys-181, and Cys-184. A Radical SAM core domain is found at 163–393 (RDSVYAGWVS…TALQDRIAAE (231 aa)). The 71-residue stretch at 396-466 (AKQLGRKVEV…AFHLVADPAG (71 aa)) folds into the TRAM domain. Positions 482–515 (DRSQADSCGVPAAGAASGKAGVSLGMPSLPTRRA) are disordered. Residues 490–506 (GVPAAGAASGKAGVSLG) are compositionally biased toward low complexity.

Belongs to the methylthiotransferase family. MiaB subfamily. In terms of assembly, monomer. The cofactor is [4Fe-4S] cluster.

The protein resides in the cytoplasm. It catalyses the reaction N(6)-dimethylallyladenosine(37) in tRNA + (sulfur carrier)-SH + AH2 + 2 S-adenosyl-L-methionine = 2-methylsulfanyl-N(6)-dimethylallyladenosine(37) in tRNA + (sulfur carrier)-H + 5'-deoxyadenosine + L-methionine + A + S-adenosyl-L-homocysteine + 2 H(+). Functionally, catalyzes the methylthiolation of N6-(dimethylallyl)adenosine (i(6)A), leading to the formation of 2-methylthio-N6-(dimethylallyl)adenosine (ms(2)i(6)A) at position 37 in tRNAs that read codons beginning with uridine. The polypeptide is tRNA-2-methylthio-N(6)-dimethylallyladenosine synthase (Paenarthrobacter aurescens (strain TC1)).